The sequence spans 376 residues: Putative C-mannosyltransferase DPY19L2P2 (376 aa).

Asn32 carries N-linked (GlcNAc...) asparagine glycosylation. Transmembrane regions (helical) follow at residues 52–72 (ACFYVGVIFILNGLMMGLFFI), 107–127 (LRESFSYPFLVLQMYVLTLIL), 154–174 (AQFILFTQIASLFPMYVVGYI), 182–202 (IIYMNMISVTLSFILMFGNSM), 233–253 (LNCWLIQGSAWWCGTIILKFL), and 299–319 (LLIYTKTLLLPVVMVITCFIF).

This sequence belongs to the dpy-19 family. In terms of tissue distribution, fibroblast, lung, lymphoblast, spleen and testis.

It localises to the membrane. Functionally, probable C-mannosyltransferase that mediates C-mannosylation of tryptophan residues on target proteins. This is Putative C-mannosyltransferase DPY19L2P2 (DPY19L2P2) from Homo sapiens (Human).